The following is a 475-amino-acid chain: Aspartyl/glutamyl-tRNA(Asn/Gln) amidotransferase subunit B (475 aa).

The protein belongs to the GatB/GatE family. GatB subfamily. As to quaternary structure, heterotrimer of A, B and C subunits.

The enzyme catalyses L-glutamyl-tRNA(Gln) + L-glutamine + ATP + H2O = L-glutaminyl-tRNA(Gln) + L-glutamate + ADP + phosphate + H(+). It carries out the reaction L-aspartyl-tRNA(Asn) + L-glutamine + ATP + H2O = L-asparaginyl-tRNA(Asn) + L-glutamate + ADP + phosphate + 2 H(+). Its function is as follows. Allows the formation of correctly charged Asn-tRNA(Asn) or Gln-tRNA(Gln) through the transamidation of misacylated Asp-tRNA(Asn) or Glu-tRNA(Gln) in organisms which lack either or both of asparaginyl-tRNA or glutaminyl-tRNA synthetases. The reaction takes place in the presence of glutamine and ATP through an activated phospho-Asp-tRNA(Asn) or phospho-Glu-tRNA(Gln). The sequence is that of Aspartyl/glutamyl-tRNA(Asn/Gln) amidotransferase subunit B from Bacillus thuringiensis subsp. konkukian (strain 97-27).